Here is a 123-residue protein sequence, read N- to C-terminus: Probable histone H2B 3 (123 aa).

Positions 1–31 (MAPPKPSAKGAKKAAKTVSKPKDGKKRKHAR) are disordered. Serine 110 carries O-linked (GlcNAc) serine glycosylation. A Glycyl lysine isopeptide (Lys-Gly) (interchain with G-Cter in ubiquitin) cross-link involves residue lysine 118.

It belongs to the histone H2B family. In terms of assembly, the nucleosome is a histone octamer containing two molecules each of H2A, H2B, H3 and H4 assembled in one H3-H4 heterotetramer and two H2A-H2B heterodimers. The octamer wraps approximately 147 bp of DNA. Post-translationally, monoubiquitination of Lys-118 gives a specific tag for epigenetic transcriptional activation and is also prerequisite for histone H3 'Lys-4' and 'Lys-79' methylation. In terms of processing, glcNAcylation at Ser-110 promotes monoubiquitination of Lys-118. It fluctuates in response to extracellular glucose, and associates with transcribed genes.

Its subcellular location is the nucleus. The protein resides in the chromosome. Its function is as follows. Core component of nucleosome. Nucleosomes wrap and compact DNA into chromatin, limiting DNA accessibility to the cellular machineries which require DNA as a template. Histones thereby play a central role in transcription regulation, DNA repair, DNA replication and chromosomal stability. DNA accessibility is regulated via a complex set of post-translational modifications of histones, also called histone code, and nucleosome remodeling. This chain is Probable histone H2B 3 (his-41), found in Caenorhabditis elegans.